The following is a 38-amino-acid chain: Large ribosomal subunit protein bL36 (38 aa).

The protein belongs to the bacterial ribosomal protein bL36 family.

This is Large ribosomal subunit protein bL36 from Chlorobaculum parvum (strain DSM 263 / NCIMB 8327) (Chlorobium vibrioforme subsp. thiosulfatophilum).